Consider the following 188-residue polypeptide: Proline-rich protein 3 (188 aa).

The segment at 1 to 157 is disordered; that stretch reads MPKRKKQNQH…DPQVMEDKSD (157 aa). Composition is skewed to pro residues over residues 35-46 and 69-82; these read IGPPSLLGPPPM and LIPP…PPWG. The span at 83 to 96 shows a compositional bias: low complexity; that stretch reads RGPIRRGLGPRSSP. A compositionally biased stretch (basic and acidic residues) spans 145–157; sequence PKDDPQVMEDKSD. The C3H1-type zinc finger occupies 155-183; the sequence is KSDRPVCRHFAKKGHCRYEDLCAFYHPGV.

This Pan troglodytes (Chimpanzee) protein is Proline-rich protein 3 (PRR3).